An 840-amino-acid polypeptide reads, in one-letter code: Leucine--tRNA ligase (840 aa).

The 'HIGH' region signature appears at 44–55; that stretch reads PYPSANGLHVGH. Positions 617–621 match the 'KMSKS' region motif; sequence KMSKS. K620 contributes to the ATP binding site.

Belongs to the class-I aminoacyl-tRNA synthetase family.

The protein resides in the cytoplasm. It catalyses the reaction tRNA(Leu) + L-leucine + ATP = L-leucyl-tRNA(Leu) + AMP + diphosphate. The chain is Leucine--tRNA ligase from Borrelia garinii subsp. bavariensis (strain ATCC BAA-2496 / DSM 23469 / PBi) (Borreliella bavariensis).